The primary structure comprises 214 residues: 3-isopropylmalate dehydratase small subunit (214 aa).

Belongs to the LeuD family. LeuD type 1 subfamily. Heterodimer of LeuC and LeuD.

It carries out the reaction (2R,3S)-3-isopropylmalate = (2S)-2-isopropylmalate. The protein operates within amino-acid biosynthesis; L-leucine biosynthesis; L-leucine from 3-methyl-2-oxobutanoate: step 2/4. In terms of biological role, catalyzes the isomerization between 2-isopropylmalate and 3-isopropylmalate, via the formation of 2-isopropylmaleate. This chain is 3-isopropylmalate dehydratase small subunit, found in Pseudomonas putida (strain ATCC 47054 / DSM 6125 / CFBP 8728 / NCIMB 11950 / KT2440).